Consider the following 336-residue polypeptide: Cytosolic Fe-S cluster assembly factor NBP35 (336 aa).

A disordered region spans residues 1-20 (MIATQRPFPIPSPVPLAPSS). [4Fe-4S] cluster contacts are provided by C35, C49, C52, and C58. 88-95 (GKGGVGKS) is a binding site for ATP. Residues C261 and C264 each coordinate [4Fe-4S] cluster.

Belongs to the Mrp/NBP35 ATP-binding proteins family. NUBP1/NBP35 subfamily. In terms of assembly, heterotetramer of 2 NBP35 and 2 CFD1 chains. [4Fe-4S] cluster serves as cofactor.

The protein localises to the cytoplasm. In terms of biological role, component of the cytosolic iron-sulfur (Fe/S) protein assembly (CIA) machinery. Required for maturation of extramitochondrial Fe-S proteins. The NBP35-CFD1 heterotetramer forms a Fe-S scaffold complex, mediating the de novo assembly of an Fe-S cluster and its transfer to target apoproteins. The chain is Cytosolic Fe-S cluster assembly factor NBP35 from Cryptococcus neoformans var. neoformans serotype D (strain B-3501A) (Filobasidiella neoformans).